The chain runs to 149 residues: 5-hydroxytryptamine receptor 1E (149 aa).

The Extracellular segment spans residues 1–6 (HQPANY). Residues 7–31 (LICSLAVTDLLVAVLVMPLSIMYIV) traverse the membrane as a helical segment. Over 32-39 (MDSWRLGY) the chain is Cytoplasmic. Residues 40–65 (FICEVWLSVDMTCCTCSILHLCVIAL) form a helical membrane-spanning segment. Residues Cys42 and Cys120 are joined by a disulfide bond. Serotonin is bound by residues Asp49 and Cys53. Residues 66–68 (DRY) carry the DRY motif; important for ligand-induced conformation changes motif. Residues 66 to 85 (DRYWAITNAIEYARKRTAKR) lie on the Extracellular side of the membrane. A helical transmembrane segment spans residues 86–104 (AGLMILTVWTISIFISMPP). Topologically, residues 105 to 149 (LFWRSHRQLSPPPSQCAIQHDHVIYTIYSTLGAFYIPLTLILILY) are cytoplasmic.

Belongs to the G-protein coupled receptor 1 family.

Its subcellular location is the cell membrane. Its function is as follows. G-protein coupled receptor for 5-hydroxytryptamine (serotonin). Also functions as a receptor for various alkaloids and psychoactive substances. Ligand binding causes a conformation change that triggers signaling via guanine nucleotide-binding proteins (G proteins) and modulates the activity of downstream effectors, such as adenylate cyclase. HTR1E is coupled to G(i)/G(o) G alpha proteins and mediates inhibitory neurotransmission by inhibiting adenylate cyclase activity. This chain is 5-hydroxytryptamine receptor 1E (HTR1E), found in Sus scrofa (Pig).